A 383-amino-acid polypeptide reads, in one-letter code: Dual-specificity RNA methyltransferase RlmN (383 aa).

The active-site Proton acceptor is glutamate 93. The Radical SAM core domain occupies 99-339 (EETRGTLCVS…TTIRKTRGDD (241 aa)). Residues cysteine 106 and cysteine 344 are joined by a disulfide bond. Residues cysteine 113, cysteine 117, and cysteine 120 each contribute to the [4Fe-4S] cluster site. Residues 170-171 (GE), serine 202, 224-226 (SLH), and asparagine 301 contribute to the S-adenosyl-L-methionine site. The active-site S-methylcysteine intermediate is cysteine 344.

Belongs to the radical SAM superfamily. RlmN family. [4Fe-4S] cluster is required as a cofactor.

The protein resides in the cytoplasm. It carries out the reaction adenosine(2503) in 23S rRNA + 2 reduced [2Fe-2S]-[ferredoxin] + 2 S-adenosyl-L-methionine = 2-methyladenosine(2503) in 23S rRNA + 5'-deoxyadenosine + L-methionine + 2 oxidized [2Fe-2S]-[ferredoxin] + S-adenosyl-L-homocysteine. It catalyses the reaction adenosine(37) in tRNA + 2 reduced [2Fe-2S]-[ferredoxin] + 2 S-adenosyl-L-methionine = 2-methyladenosine(37) in tRNA + 5'-deoxyadenosine + L-methionine + 2 oxidized [2Fe-2S]-[ferredoxin] + S-adenosyl-L-homocysteine. Its function is as follows. Specifically methylates position 2 of adenine 2503 in 23S rRNA and position 2 of adenine 37 in tRNAs. m2A2503 modification seems to play a crucial role in the proofreading step occurring at the peptidyl transferase center and thus would serve to optimize ribosomal fidelity. The chain is Dual-specificity RNA methyltransferase RlmN from Ralstonia nicotianae (strain ATCC BAA-1114 / GMI1000) (Ralstonia solanacearum).